Here is a 397-residue protein sequence, read N- to C-terminus: 3-ketoacyl-CoA thiolase, mitochondrial (397 aa).

A mitochondrion; not cleaved-targeting transit peptide spans 1–16; sequence MALLRGVFIVAAKRTP. The residue at position 25 (Lys25) is an N6-acetyllysine; alternate. The residue at position 25 (Lys25) is an N6-succinyllysine; alternate. Ser28 bears the Phosphoserine mark. The residue at position 45 (Lys45) is an N6-succinyllysine. Cys92 serves as the catalytic Acyl-thioester intermediate. Position 119 is a phosphothreonine (Thr119). Ser121 carries the post-translational modification Phosphoserine. A Phosphotyrosine modification is found at Tyr127. At Thr136 the chain carries Phosphothreonine. N6-acetyllysine; alternate is present on residues Lys137, Lys143, Lys158, Lys171, Lys191, and Lys209. Residues Lys137, Lys143, Lys158, Lys171, Lys191, and Lys209 each carry the N6-succinyllysine; alternate modification. N6-succinyllysine is present on residues Lys211, Lys212, and Lys214. CoA-binding residues include Arg224 and Thr227. Lys234 bears the N6-acetyllysine; alternate mark. N6-succinyllysine; alternate is present on Lys234. Lys240 carries the post-translational modification N6-succinyllysine. Residue Lys241 is modified to N6-acetyllysine. Residue Ser251 participates in CoA binding. An N6-acetyllysine mark is found at Lys269 and Lys270. At Lys305 the chain carries N6-acetyllysine; alternate. The residue at position 305 (Lys305) is an N6-succinyllysine; alternate. Ser310 is subject to Phosphoserine. N6-acetyllysine; alternate is present on Lys312. Lys312 is modified (N6-succinyllysine; alternate). Lys340 bears the N6-acetyllysine mark. A Phosphoserine modification is found at Ser344. At Lys375 the chain carries N6-acetyllysine. Catalysis depends on Cys382, which acts as the Proton donor/acceptor.

Belongs to the thiolase-like superfamily. Thiolase family. As to quaternary structure, homotetramer. Interacts with BNIP3.

Its subcellular location is the mitochondrion. It catalyses the reaction an acyl-CoA + acetyl-CoA = a 3-oxoacyl-CoA + CoA. The catalysed reaction is 2 acetyl-CoA = acetoacetyl-CoA + CoA. It carries out the reaction acetyl-CoA + H2O = acetate + CoA + H(+). The enzyme catalyses propanoyl-CoA + H2O = propanoate + CoA + H(+). It catalyses the reaction butanoyl-CoA + H2O = butanoate + CoA + H(+). The catalysed reaction is hexanoyl-CoA + H2O = hexanoate + CoA + H(+). It carries out the reaction octanoyl-CoA + H2O = octanoate + CoA + H(+). The enzyme catalyses decanoyl-CoA + H2O = decanoate + CoA + H(+). It catalyses the reaction dodecanoyl-CoA + H2O = dodecanoate + CoA + H(+). The catalysed reaction is tetradecanoyl-CoA + H2O = tetradecanoate + CoA + H(+). It carries out the reaction hexadecanoyl-CoA + H2O = hexadecanoate + CoA + H(+). Its pathway is lipid metabolism; fatty acid beta-oxidation. Functionally, in the production of energy from fats, this is one of the enzymes that catalyzes the last step of the mitochondrial beta-oxidation pathway, an aerobic process breaking down fatty acids into acetyl-CoA. Using free coenzyme A/CoA, catalyzes the thiolytic cleavage of medium- to long-chain unbranched 3-oxoacyl-CoAs into acetyl-CoA and a fatty acyl-CoA shortened by two carbon atoms. Also catalyzes the condensation of two acetyl-CoA molecules into acetoacetyl-CoA and could be involved in the production of ketone bodies. Also displays hydrolase activity on various fatty acyl-CoAs. Thereby, could be responsible for the production of acetate in a side reaction to beta-oxidation. Abolishes BNIP3-mediated apoptosis and mitochondrial damage. This Mus musculus (Mouse) protein is 3-ketoacyl-CoA thiolase, mitochondrial (Acaa2).